The primary structure comprises 515 residues: Glucose-6-phosphate 1-dehydrogenase X (515 aa).

Alanine 2 carries the N-acetylalanine modification. NADP(+) contacts are provided by residues 38-45 (GASGDLAK), arginine 72, tyrosine 147, and lysine 171. D-glucose 6-phosphate contacts are provided by residues lysine 171, 201-205 (HYLGK), glutamate 239, and aspartate 258. The Proton acceptor role is filled by histidine 263. Arginine 357 is an NADP(+) binding site. D-glucose 6-phosphate is bound by residues lysine 360 and arginine 365. Positions 366, 370, and 393 each coordinate NADP(+). Residue glutamine 395 coordinates D-glucose 6-phosphate. Residues 401–403 (YTK), 421–423 (DLT), arginine 487, and tyrosine 503 each bind NADP(+). Tyrosine 507 carries the post-translational modification Phosphotyrosine. Tryptophan 509 contacts NADP(+).

The protein belongs to the glucose-6-phosphate dehydrogenase family. In terms of assembly, homotetramer; dimer of dimers. Interacts with SIRT2; the interaction is enhanced by H(2)O(2) treatment. Forms a ternary complex with ALDOB and TP53; this interaction is direct. ALDOB stabilizes the complex inhibiting G6PD activity and keeping oxidative pentose phosphate metabolism in check. In terms of processing, acetylated by ELP3 at Lys-403; acetylation inhibits its homodimerization and enzyme activity. Deacetylated by SIRT2 at Lys-403; deacetylation stimulates its enzyme activity.

It localises to the cytoplasm. It is found in the cytosol. The protein localises to the membrane. It carries out the reaction D-glucose 6-phosphate + NADP(+) = 6-phospho-D-glucono-1,5-lactone + NADPH + H(+). It participates in carbohydrate degradation; pentose phosphate pathway; D-ribulose 5-phosphate from D-glucose 6-phosphate (oxidative stage): step 1/3. Its function is as follows. Catalyzes the rate-limiting step of the oxidative pentose-phosphate pathway, which represents a route for the dissimilation of carbohydrates besides glycolysis. The main function of this enzyme is to provide reducing power (NADPH) and pentose phosphates for fatty acid and nucleic acid synthesis. The polypeptide is Glucose-6-phosphate 1-dehydrogenase X (G6pdx) (Mus musculus (Mouse)).